Here is a 261-residue protein sequence, read N- to C-terminus: Probable RNA-binding protein ARP1 (261 aa).

In terms of domain architecture, RRM spans 17-94 (TKVFVGGLAW…RRANCNLASL (78 aa)). Residues 96–122 (GRLRKSPTMTSPQQGPKNGNRATPPHV) form a disordered region. The segment covering 102–116 (PTMTSPQQGPKNGNR) has biased composition (polar residues).

As to expression, expressed in vasculature of leaves, roots and siliques.

The protein resides in the nucleus. Its function is as follows. Probable RNA-binding protein involved in the regulation of abscisic acid (ABA) response during seed germination. May regulate transcript levels of several germination-responsive genes under ABA. In Arabidopsis thaliana (Mouse-ear cress), this protein is Probable RNA-binding protein ARP1.